A 60-amino-acid polypeptide reads, in one-letter code: Sec-independent protein translocase protein TatA (60 aa).

The helical transmembrane segment at 1–21 threads the bilayer; it reads MTPAGPAQLLIVALVVIVLFG.

Belongs to the TatA/E family. The Tat system comprises two distinct complexes: a TatABC complex, containing multiple copies of TatA, TatB and TatC subunits, and a separate TatA complex, containing only TatA subunits. Substrates initially bind to the TatABC complex, which probably triggers association of the separate TatA complex to form the active translocon.

Its subcellular location is the cell membrane. In terms of biological role, part of the twin-arginine translocation (Tat) system that transports large folded proteins containing a characteristic twin-arginine motif in their signal peptide across membranes. TatA could form the protein-conducting channel of the Tat system. The sequence is that of Sec-independent protein translocase protein TatA from Corynebacterium glutamicum (strain R).